The primary structure comprises 154 residues: Probable deoxyuridine 5'-triphosphate nucleotidohydrolase (154 aa).

This sequence belongs to the dCTP deaminase family. Archaeal dUTPase subfamily.

It carries out the reaction dUTP + H2O = dUMP + diphosphate + H(+). The protein operates within pyrimidine metabolism; dUMP biosynthesis; dUMP from dCTP (dUTP route): step 2/2. This enzyme is involved in nucleotide metabolism: it produces dUMP, the immediate precursor of thymidine nucleotides and it decreases the intracellular concentration of dUTP so that uracil cannot be incorporated into DNA. This Methanopyrus kandleri (strain AV19 / DSM 6324 / JCM 9639 / NBRC 100938) protein is Probable deoxyuridine 5'-triphosphate nucleotidohydrolase.